The sequence spans 248 residues: Adenosylcobinamide-GDP ribazoletransferase (248 aa).

Transmembrane regions (helical) follow at residues Glu3–Ile23, Ser35–Leu55, Ile63–Gly83, Leu109–Ser129, Leu135–Ile155, Phe180–Asp199, Leu200–Ser219, and Asp228–Leu248.

It belongs to the CobS family. Requires Mg(2+) as cofactor.

It is found in the cell membrane. It catalyses the reaction alpha-ribazole + adenosylcob(III)inamide-GDP = adenosylcob(III)alamin + GMP + H(+). The catalysed reaction is alpha-ribazole 5'-phosphate + adenosylcob(III)inamide-GDP = adenosylcob(III)alamin 5'-phosphate + GMP + H(+). The protein operates within cofactor biosynthesis; adenosylcobalamin biosynthesis; adenosylcobalamin from cob(II)yrinate a,c-diamide: step 7/7. In terms of biological role, joins adenosylcobinamide-GDP and alpha-ribazole to generate adenosylcobalamin (Ado-cobalamin). Also synthesizes adenosylcobalamin 5'-phosphate from adenosylcobinamide-GDP and alpha-ribazole 5'-phosphate. The polypeptide is Adenosylcobinamide-GDP ribazoletransferase (Caldanaerobacter subterraneus subsp. tengcongensis (strain DSM 15242 / JCM 11007 / NBRC 100824 / MB4) (Thermoanaerobacter tengcongensis)).